A 56-amino-acid polypeptide reads, in one-letter code: Large ribosomal subunit protein bL33 (56 aa).

It belongs to the bacterial ribosomal protein bL33 family.

The polypeptide is Large ribosomal subunit protein bL33 (Anaplasma phagocytophilum (strain HZ)).